We begin with the raw amino-acid sequence, 186 residues long: Ribosome-recycling factor (186 aa).

It belongs to the RRF family.

It is found in the cytoplasm. Responsible for the release of ribosomes from messenger RNA at the termination of protein biosynthesis. May increase the efficiency of translation by recycling ribosomes from one round of translation to another. In Beijerinckia indica subsp. indica (strain ATCC 9039 / DSM 1715 / NCIMB 8712), this protein is Ribosome-recycling factor.